A 313-amino-acid polypeptide reads, in one-letter code: Aspartoacylase (313 aa).

2 residues coordinate Zn(2+): His21 and Glu24. Residues Arg63, Asn70, and Arg71 each contribute to the N-acetyl-L-aspartate site. Position 116 (His116) interacts with Zn(2+). Positions 164 and 168 each coordinate N-acetyl-L-aspartate. Glu178 functions as the Proton donor/acceptor in the catalytic mechanism. Position 288 (Tyr288) interacts with N-acetyl-L-aspartate.

Belongs to the AspA/AstE family. Aspartoacylase subfamily. In terms of assembly, homodimer. The cofactor is Zn(2+).

Its subcellular location is the cytoplasm. The protein resides in the nucleus. The catalysed reaction is an N-acyl-L-aspartate + H2O = a carboxylate + L-aspartate. It catalyses the reaction N-acetyl-L-aspartate + H2O = L-aspartate + acetate. Its function is as follows. Catalyzes the deacetylation of N-acetylaspartic acid (NAA) to produce acetate and L-aspartate. NAA occurs in high concentration in brain and its hydrolysis NAA plays a significant part in the maintenance of intact white matter. In other tissues it acts as a scavenger of NAA from body fluids. The protein is Aspartoacylase of Pongo abelii (Sumatran orangutan).